A 543-amino-acid polypeptide reads, in one-letter code: CTP synthase (543 aa).

Residues 1–265 form an amidoligase domain region; it reads MTNYIFVTGG…DELVVQRFGL (265 aa). A CTP-binding site is contributed by serine 13. Serine 13 contacts UTP. Residues 14-19 and aspartate 71 contribute to the ATP site; that span reads SLGKGI. Aspartate 71 and glutamate 139 together coordinate Mg(2+). CTP contacts are provided by residues 146–148, 186–191, and lysine 222; these read DIE and KTKPTQ. UTP is bound by residues 186 to 191 and lysine 222; that span reads KTKPTQ. 238 to 240 serves as a coordination point for ATP; the sequence is KDA. In terms of domain architecture, Glutamine amidotransferase type-1 spans 290–541; the sequence is TIGMVGKYVE…VKAAGEYYKN (252 aa). Glycine 351 contributes to the L-glutamine binding site. The active-site Nucleophile; for glutamine hydrolysis is cysteine 378. L-glutamine contacts are provided by residues 379-382, glutamate 402, and arginine 469; that span reads LGMQ. Residues histidine 514 and glutamate 516 contribute to the active site.

Belongs to the CTP synthase family. Homotetramer.

The catalysed reaction is UTP + L-glutamine + ATP + H2O = CTP + L-glutamate + ADP + phosphate + 2 H(+). It carries out the reaction L-glutamine + H2O = L-glutamate + NH4(+). It catalyses the reaction UTP + NH4(+) + ATP = CTP + ADP + phosphate + 2 H(+). It functions in the pathway pyrimidine metabolism; CTP biosynthesis via de novo pathway; CTP from UDP: step 2/2. Allosterically activated by GTP, when glutamine is the substrate; GTP has no effect on the reaction when ammonia is the substrate. The allosteric effector GTP functions by stabilizing the protein conformation that binds the tetrahedral intermediate(s) formed during glutamine hydrolysis. Inhibited by the product CTP, via allosteric rather than competitive inhibition. In terms of biological role, catalyzes the ATP-dependent amination of UTP to CTP with either L-glutamine or ammonia as the source of nitrogen. Regulates intracellular CTP levels through interactions with the four ribonucleotide triphosphates. The polypeptide is CTP synthase (Pseudoalteromonas atlantica (strain T6c / ATCC BAA-1087)).